Consider the following 246-residue polypeptide: Major prion protein (246 aa).

The N-terminal stretch at 1-15 (MLVLFVATWSDLGLC) is a signal peptide. An interaction with GRB2, ERI3 and SYN1 region spans residues 16–223 (KKRPKPGGWN…ESQAYYQRGS (208 aa)). The interval 18 to 102 (RPKPGGWNTG…HKPSKPKTSM (85 aa)) is disordered. Repeat copies occupy residues 44 to 52 (PQGGGGWGQ), 53 to 60 (PHGGGWGQ), 61 to 68 (PHGGGWGQ), 69 to 76 (PHGGGWGQ), and 77 to 84 (PHGGGWGQ). The tract at residues 44-84 (PQGGGGWGQPHGGGWGQPHGGGWGQPHGGGWGQPHGGGWGQ) is 5 X 8 AA tandem repeats of P-H-G-G-G-W-G-Q. A compositionally biased stretch (gly residues) spans 45–88 (QGGGGWGQPHGGGWGQPHGGGWGQPHGGGWGQPHGGGWGQGGGT). Cu(2+) is bound by residues histidine 54, glycine 55, glycine 56, histidine 62, glycine 63, glycine 64, histidine 70, glycine 71, glycine 72, histidine 78, glycine 79, and glycine 80. Residues 91–102 (QWHKPSKPKTSM) show a composition bias toward basic residues. Cysteine 172 and cysteine 207 are oxidised to a cystine. 2 N-linked (GlcNAc...) asparagine glycosylation sites follow: asparagine 174 and asparagine 190. The GPI-anchor amidated serine moiety is linked to residue serine 223. The propeptide at 224 to 246 (SMVLFSSPPVILLISFLIFLIVG) is removed in mature form.

Belongs to the prion family. As to quaternary structure, monomer and homodimer. Has a tendency to aggregate into amyloid fibrils containing a cross-beta spine, formed by a steric zipper of superposed beta-strands. Soluble oligomers may represent an intermediate stage on the path to fibril formation. Copper binding may promote oligomerization. Interacts with GRB2, APP, ERI3/PRNPIP and SYN1. Mislocalized cytosolically exposed PrP interacts with MGRN1; this interaction alters MGRN1 subcellular location and causes lysosomal enlargement. Interacts with KIAA1191.

It localises to the cell membrane. The protein localises to the golgi apparatus. Functionally, its primary physiological function is unclear. Has cytoprotective activity against internal or environmental stresses. May play a role in neuronal development and synaptic plasticity. May be required for neuronal myelin sheath maintenance. May play a role in iron uptake and iron homeostasis. Soluble oligomers are toxic to cultured neuroblastoma cells and induce apoptosis (in vitro). Association with GPC1 (via its heparan sulfate chains) targets PRNP to lipid rafts. Also provides Cu(2+) or Zn(2+) for the ascorbate-mediated GPC1 deaminase degradation of its heparan sulfate side chains. The protein is Major prion protein (PRNP) of Cercocebus atys (Sooty mangabey).